The following is a 359-amino-acid chain: Peptide chain release factor 1 (359 aa).

Position 235 is an N5-methylglutamine (Q235). Over residues 283 to 294 the composition is skewed to basic and acidic residues; the sequence is SKADEERSESRK. Residues 283–309 are disordered; sequence SKADEERSESRKSQVGSGDRSERIRTY.

Belongs to the prokaryotic/mitochondrial release factor family. Methylated by PrmC. Methylation increases the termination efficiency of RF1.

It is found in the cytoplasm. Peptide chain release factor 1 directs the termination of translation in response to the peptide chain termination codons UAG and UAA. The sequence is that of Peptide chain release factor 1 from Mesorhizobium japonicum (strain LMG 29417 / CECT 9101 / MAFF 303099) (Mesorhizobium loti (strain MAFF 303099)).